Reading from the N-terminus, the 171-residue chain is 3-hydroxydecanoyl-[acyl-carrier-protein] dehydratase (171 aa).

Residue histidine 70 is part of the active site.

The protein belongs to the thioester dehydratase family. FabA subfamily. As to quaternary structure, homodimer.

It is found in the cytoplasm. It carries out the reaction a (3R)-hydroxyacyl-[ACP] = a (2E)-enoyl-[ACP] + H2O. The enzyme catalyses (3R)-hydroxydecanoyl-[ACP] = (2E)-decenoyl-[ACP] + H2O. The catalysed reaction is (2E)-decenoyl-[ACP] = (3Z)-decenoyl-[ACP]. It participates in lipid metabolism; fatty acid biosynthesis. In terms of biological role, necessary for the introduction of cis unsaturation into fatty acids. Catalyzes the dehydration of (3R)-3-hydroxydecanoyl-ACP to E-(2)-decenoyl-ACP and then its isomerization to Z-(3)-decenoyl-ACP. Can catalyze the dehydratase reaction for beta-hydroxyacyl-ACPs with saturated chain lengths up to 16:0, being most active on intermediate chain length. This is 3-hydroxydecanoyl-[acyl-carrier-protein] dehydratase from Shewanella putrefaciens (strain CN-32 / ATCC BAA-453).